We begin with the raw amino-acid sequence, 138 residues long: MQDSPANVVQPDWLDDIQWTEDGLVPAIAQDADNGDILMMAWMNRESLRLTVEEGQAVYWSRSRGKLWRKGESSGHQQVLRDIRLDCDADVVLLKVEQKGGIACHTGRRSCFYRTLKDGQWVSADPVIKDPNTIYGSN.

Asp86 contacts Mg(2+). Cys87 is a Zn(2+) binding site. The Mg(2+) site is built by Asp88 and Asp90. The Zn(2+) site is built by Cys104 and Cys111.

This sequence belongs to the PRA-CH family. Homodimer. Requires Mg(2+) as cofactor. The cofactor is Zn(2+).

Its subcellular location is the cytoplasm. The catalysed reaction is 1-(5-phospho-beta-D-ribosyl)-5'-AMP + H2O = 1-(5-phospho-beta-D-ribosyl)-5-[(5-phospho-beta-D-ribosylamino)methylideneamino]imidazole-4-carboxamide. It participates in amino-acid biosynthesis; L-histidine biosynthesis; L-histidine from 5-phospho-alpha-D-ribose 1-diphosphate: step 3/9. In terms of biological role, catalyzes the hydrolysis of the adenine ring of phosphoribosyl-AMP. The polypeptide is Phosphoribosyl-AMP cyclohydrolase (Marinobacter nauticus (strain ATCC 700491 / DSM 11845 / VT8) (Marinobacter aquaeolei)).